Reading from the N-terminus, the 309-residue chain is MGSKSKILIIGGTGYIGKFIVEASVKEGHPTFALVRETTVSDPVKGKLVEKFQNLGVSLLYGDLYDHDSLVKAIKQVDVVISTVGFMQIADQTKIIAAIKEAGNVKRFFPSEFGNDVDHVNAVEPAKSVAFAVKANIRRAVEAEGIPYTYVASNCFNGYFLPTLVQPGATTPPRDKVIIPGDGNPKAIFNKEEDIGTYTIKAVDDPRTLNKILYLRPSNNIYSFNELVALWEKKIGKTLEKIYVPEEQILKDIQEAPIPINIFLGINHSVFVKGDHTNFEIEPSFGVEASELYPEVKYTTVEEYLDQFV.

NADP(+)-binding positions include 13–16 (TGYI), 35–45 (VRETTVSDPVK), Arg36, 86–88 (FMQ), 111–113 (SEF), Lys134, and 154–156 (NCF). Catalysis depends on Lys134, which acts as the Proton donor/acceptor.

The protein belongs to the NmrA-type oxidoreductase family. In terms of tissue distribution, mostly expressed in petals, and, to a lower extent, in sepals, stamens and pistils.

It catalyses the reaction eugenol + a carboxylate + NADP(+) = a coniferyl ester + NADPH. The catalysed reaction is eugenol + acetate + NADP(+) = (E)-coniferyl acetate + NADPH. It functions in the pathway aromatic compound metabolism; phenylpropanoid biosynthesis. Catalyzes the synthesis of the phenylpropene eugenol from coniferyl acetate. Phenylpropenes are produced by plants as defense compounds with antimicrobial and antianimal properties, or as floral attractants of pollinators. This Clarkia breweri (Fairy fans) protein is Eugenol synthase 2.